Consider the following 434-residue polypeptide: Ribitol-5-phosphate xylosyltransferase 1 (434 aa).

At 1–7 the chain is on the cytoplasmic side; it reads MRFFRRK. The helical; Signal-anchor for type II membrane protein transmembrane segment at 8 to 28 threads the bilayer; that stretch reads IAIIVILAYAIFSLYAAYNVF. Residues 29-434 lie on the Extracellular side of the membrane; the sequence is FSKRVISRVH…VLEENFFKIT (406 aa).

Belongs to the TMEM5 family.

It is found in the golgi apparatus membrane. The enzyme catalyses 3-O-[Rib-ol-P-Rib-ol-P-3-beta-D-GalNAc-(1-&gt;3)-beta-D-GlcNAc-(1-&gt;4)-(O-6-P-alpha-D-Man)]-Thr-[protein] + UDP-alpha-D-xylose = 3-O-[beta-D-Xyl-(1-&gt;4)-Rib-ol-P-Rib-ol-P-3-beta-D-GalNAc-(1-&gt;3)-beta-D-GlcNAc-(1-&gt;4)-(O-6-P-alpha-D-Man)]-Thr-[protein] + UDP + H(+). Its pathway is protein modification; protein glycosylation. Its function is as follows. Acts as a UDP-D-xylose:ribitol-5-phosphate beta1,4-xylosyltransferase, which catalyzes the transfer of UDP-D-xylose to ribitol 5-phosphate (Rbo5P) to form the Xylbeta1-4Rbo5P linkage on O-mannosyl glycan. Participates in the biosynthesis of the phosphorylated O-mannosyl trisaccharide (N-acetylgalactosamine-beta-3-N-acetylglucosamine-beta-4-(phosphate-6-)mannose), a carbohydrate structure present in alpha-dystroglycan (DAG1), which is required for binding laminin G-like domain-containing extracellular proteins with high affinity. The polypeptide is Ribitol-5-phosphate xylosyltransferase 1 (rxylt1) (Danio rerio (Zebrafish)).